Reading from the N-terminus, the 855-residue chain is DNA mismatch repair protein MutS (855 aa).

616–623 (GPNMGGKS) contacts ATP.

This sequence belongs to the DNA mismatch repair MutS family.

Its function is as follows. This protein is involved in the repair of mismatches in DNA. It is possible that it carries out the mismatch recognition step. This protein has a weak ATPase activity. This Salmonella newport (strain SL254) protein is DNA mismatch repair protein MutS.